A 439-amino-acid chain; its full sequence is tRNA modification GTPase MnmE (439 aa).

Positions 20, 78, and 116 each coordinate (6S)-5-formyl-5,6,7,8-tetrahydrofolate. In terms of domain architecture, TrmE-type G spans 211 to 364; it reads GIYVAILGEP…LLSAIQKKVE (154 aa). GTP-binding positions include 221 to 226, 240 to 246, and 265 to 268; these read NSGKST, SEYAGTT, and DTAG. Ser225 and Thr246 together coordinate Mg(2+). Residue Lys439 coordinates (6S)-5-formyl-5,6,7,8-tetrahydrofolate.

It belongs to the TRAFAC class TrmE-Era-EngA-EngB-Septin-like GTPase superfamily. TrmE GTPase family. As to quaternary structure, homodimer. Heterotetramer of two MnmE and two MnmG subunits. Requires K(+) as cofactor.

The protein localises to the cytoplasm. Exhibits a very high intrinsic GTPase hydrolysis rate. Involved in the addition of a carboxymethylaminomethyl (cmnm) group at the wobble position (U34) of certain tRNAs, forming tRNA-cmnm(5)s(2)U34. The protein is tRNA modification GTPase MnmE of Ehrlichia ruminantium (strain Welgevonden).